A 704-amino-acid chain; its full sequence is Polyribonucleotide nucleotidyltransferase (704 aa).

Mg(2+) contacts are provided by D487 and D493. The KH domain occupies 554 to 613; it reads PRLLTIKIHPDKIREVIGKGGSTIQAITKETGTQIDIQDDGTIIIASVNAIAAQAAKSRI. The 69-residue stretch at 623-691 folds into the S1 motif domain; that stretch reads GRIYEGKVAK…KQGRIRLSIK (69 aa).

The protein belongs to the polyribonucleotide nucleotidyltransferase family. Component of the RNA degradosome, which is a multiprotein complex involved in RNA processing and mRNA degradation. Requires Mg(2+) as cofactor.

The protein resides in the cytoplasm. The enzyme catalyses RNA(n+1) + phosphate = RNA(n) + a ribonucleoside 5'-diphosphate. Functionally, involved in mRNA degradation. Catalyzes the phosphorolysis of single-stranded polyribonucleotides processively in the 3'- to 5'-direction. In Xanthomonas euvesicatoria pv. vesicatoria (strain 85-10) (Xanthomonas campestris pv. vesicatoria), this protein is Polyribonucleotide nucleotidyltransferase.